The primary structure comprises 372 residues: 3-dehydroquinate synthase (372 aa).

NAD(+)-binding positions include 116-120 (GVVGD), 140-141 (TT), K153, K162, and 180-183 (TLKT). Residues E195, H260, and H277 each coordinate Zn(2+).

This sequence belongs to the sugar phosphate cyclases superfamily. Dehydroquinate synthase family. It depends on NAD(+) as a cofactor. Co(2+) is required as a cofactor. Requires Zn(2+) as cofactor.

The protein resides in the cytoplasm. It carries out the reaction 7-phospho-2-dehydro-3-deoxy-D-arabino-heptonate = 3-dehydroquinate + phosphate. It participates in metabolic intermediate biosynthesis; chorismate biosynthesis; chorismate from D-erythrose 4-phosphate and phosphoenolpyruvate: step 2/7. In terms of biological role, catalyzes the conversion of 3-deoxy-D-arabino-heptulosonate 7-phosphate (DAHP) to dehydroquinate (DHQ). The polypeptide is 3-dehydroquinate synthase (Prochlorococcus marinus (strain MIT 9313)).